The primary structure comprises 94 residues: Pyrimidine/purine nucleoside phosphorylase (94 aa).

It belongs to the nucleoside phosphorylase PpnP family.

The enzyme catalyses a purine D-ribonucleoside + phosphate = a purine nucleobase + alpha-D-ribose 1-phosphate. The catalysed reaction is adenosine + phosphate = alpha-D-ribose 1-phosphate + adenine. It catalyses the reaction cytidine + phosphate = cytosine + alpha-D-ribose 1-phosphate. It carries out the reaction guanosine + phosphate = alpha-D-ribose 1-phosphate + guanine. The enzyme catalyses inosine + phosphate = alpha-D-ribose 1-phosphate + hypoxanthine. The catalysed reaction is thymidine + phosphate = 2-deoxy-alpha-D-ribose 1-phosphate + thymine. It catalyses the reaction uridine + phosphate = alpha-D-ribose 1-phosphate + uracil. It carries out the reaction xanthosine + phosphate = alpha-D-ribose 1-phosphate + xanthine. In terms of biological role, catalyzes the phosphorolysis of diverse nucleosides, yielding D-ribose 1-phosphate and the respective free bases. Can use uridine, adenosine, guanosine, cytidine, thymidine, inosine and xanthosine as substrates. Also catalyzes the reverse reactions. The protein is Pyrimidine/purine nucleoside phosphorylase of Vibrio parahaemolyticus serotype O3:K6 (strain RIMD 2210633).